The following is a 279-amino-acid chain: MLGGRHSHWSPQDLEEQAFSPYGTFPPSPTESTETSSSISSTRPRVNPRIVSDAILGLSDGLTVPFALSAGLSALGNSRVVVVGGLAELVAGAISMGLGGYVGSRSEVESYEATVRETKHLVKASPMETMNIIHQVFAPYNLPEEPVARMSHILYNSPEKLLDFLLTFYHKESKPGCHQAWISAITLALGYFIGGFIPLIPYFMVDQVLVALYYSIGIMIFTLLVFGYVKTCVVRGWTGKENIVAGIKGGLQMVVVGGLAAGASIALARAINPTGGALF.

The interval 1–44 (MLGGRHSHWSPQDLEEQAFSPYGTFPPSPTESTETSSSISSTRP) is disordered. Low complexity predominate over residues 30–44 (TESTETSSSISSTRP). 5 helical membrane passes run 55–75 (ILGL…LSAL), 80–100 (VVVV…GLGG), 185–205 (ITLA…YFMV), 208–228 (VLVA…VFGY), and 243–263 (IVAG…AAGA).

This sequence belongs to the CCC1 family.

It localises to the vacuole membrane. It carries out the reaction Fe(2+)(in) = Fe(2+)(out). Vacuolar iron transporter involved in the transfer of iron from the cytosol to the vacuole for intracellular iron storage. Plays an essential role in iron detoxification during high iron conditions. In Arthroderma benhamiae (strain ATCC MYA-4681 / CBS 112371) (Trichophyton mentagrophytes), this protein is Vacuolar iron transporter cccA.